We begin with the raw amino-acid sequence, 2587 residues long: Clavatol synthase claF (2587 aa).

The tract at residues Leu-93–His-256 is N-terminal acylcarrier protein transacylase domain (SAT). The active-site Nucleophile; for transacylase activity is Cys-137. His-256 acts as the Proton donor/acceptor; for transacylase activity in catalysis. Residues Asp-383–Gln-799 enclose the Ketosynthase family 3 (KS3) domain. Active-site for beta-ketoacyl synthase activity residues include Cys-548, His-683, and His-722. A malonyl-CoA:ACP transacylase (MAT) domain region spans residues Cys-912 to Thr-1222. Residues Pro-1284 to Asp-1416 are N-terminal hotdog fold. The region spanning Pro-1284 to Arg-1595 is the PKS/mFAS DH domain. The tract at residues Leu-1315 to Ser-1593 is product template (PT) domain. Residues Ala-1436–Arg-1595 form a C-terminal hotdog fold region. The interval Ser-1609 to Ser-1635 is disordered. Low complexity predominate over residues Ser-1617–Ser-1635. One can recognise a Carrier domain in the interval Pro-1654 to Leu-1728. Ser-1688 carries the O-(pantetheine 4'-phosphoryl)serine modification. Residues Tyr-1947, His-2059, and Glu-2085 each act as for methyltransferase activity in the active site. Residues Val-1952–Ser-2126 are methyltransferase (CMeT) domain. The interval Ser-2208–Leu-2452 is NADPH-binding (R) domain.

It depends on pantetheine 4'-phosphate as a cofactor.

It catalyses the reaction 3 malonyl-CoA + acetyl-CoA + AH2 + 2 S-adenosyl-L-methionine + H(+) = clavatol + A + 2 S-adenosyl-L-homocysteine + 3 CO2 + 4 CoA + H2O. It participates in secondary metabolite biosynthesis. Functionally, non-reducing polyketide synthase; part of the cla gene cluster that produces clavatol and ortho-quinone methide. The clavatol biosynthesis cluster cla and the terrestric acid cluster tra are both involved in the production of peniphenones and penilactones. The non-reducing PKS claF is responsible for the formation of clavatol from successive condensations of 3 malonyl-CoA units, presumably with a simple acetyl-CoA starter unit, and 2 methylation steps. The esterase claE probably collaborates with claF by catalyzing the hydrolysis of ACP-bound acyl intermediates to free the ACP from stalled intermediates. The clavatol oxidase claD then converts clavatol to hydroxyclavatol. Spontaneous dehydration of hydroxyclavatol leads to the accumulation of the highly active ortho-quinone methide. On the other hand, the PKS-NRPS hybrid traA is involved in the formation of crustosic acid, with the help of traB and traD. The polyketide synthase module (PKS) of traA is responsible for the synthesis of the polyketide backbone via the condensation of an acetyl-CoA starter unit with 3 malonyl-CoA units. The downstream nonribosomal peptide synthetase (NRPS) module then amidates the carboxyl end of the polyketide with L-malic acid. Because traA lacks a designated enoylreductase (ER) domain, the required activity is provided the enoyl reductase traG. Crustosic acid undergoes decarboxylation and isomerization to the terrestric acid, catalyzed by the 2-oxoglutarate-dependent dioxygenase traH. Both acids are further converted to the 2 gamma-butyrolactones (R)-5-methyltetronic acid and (S)-5-carboxylmethyltetronic acid, with involvement of the cytochrome P450 monooxygenase claJ. Spontaneous addition of the methide to these gamma-butyrolactones leads to peniphenone D and penilactone D, which undergo again stereospecific attacking by methide to give penilactones A and B. In Penicillium crustosum (Blue mold fungus), this protein is Clavatol synthase claF.